The following is a 310-amino-acid chain: Acetyl-coenzyme A carboxylase carboxyl transferase subunit beta (310 aa).

Residues 27–296 form the CoA carboxyltransferase N-terminal domain; the sequence is LWRKCPNCEA…QDRDAEPDDT (270 aa). Residues Cys31, Cys34, Cys50, and Cys53 each coordinate Zn(2+). The C4-type zinc-finger motif lies at 31–53; that stretch reads CPNCEAVLYLPELERHQSVCPKC. Residues 282-310 are disordered; that stretch reads THQPHQDRDAEPDDTASQSTLDEFSQADH.

Belongs to the AccD/PCCB family. In terms of assembly, acetyl-CoA carboxylase is a heterohexamer composed of biotin carboxyl carrier protein (AccB), biotin carboxylase (AccC) and two subunits each of ACCase subunit alpha (AccA) and ACCase subunit beta (AccD). Zn(2+) serves as cofactor.

Its subcellular location is the cytoplasm. It carries out the reaction N(6)-carboxybiotinyl-L-lysyl-[protein] + acetyl-CoA = N(6)-biotinyl-L-lysyl-[protein] + malonyl-CoA. It functions in the pathway lipid metabolism; malonyl-CoA biosynthesis; malonyl-CoA from acetyl-CoA: step 1/1. In terms of biological role, component of the acetyl coenzyme A carboxylase (ACC) complex. Biotin carboxylase (BC) catalyzes the carboxylation of biotin on its carrier protein (BCCP) and then the CO(2) group is transferred by the transcarboxylase to acetyl-CoA to form malonyl-CoA. In Chromohalobacter salexigens (strain ATCC BAA-138 / DSM 3043 / CIP 106854 / NCIMB 13768 / 1H11), this protein is Acetyl-coenzyme A carboxylase carboxyl transferase subunit beta.